Consider the following 272-residue polypeptide: Putative phosphoenolpyruvate synthase regulatory protein (272 aa).

152–159 provides a ligand contact to ADP; sequence GVSRCGKT.

It belongs to the pyruvate, phosphate/water dikinase regulatory protein family. PSRP subfamily.

The enzyme catalyses [pyruvate, water dikinase] + ADP = [pyruvate, water dikinase]-phosphate + AMP + H(+). It carries out the reaction [pyruvate, water dikinase]-phosphate + phosphate + H(+) = [pyruvate, water dikinase] + diphosphate. In terms of biological role, bifunctional serine/threonine kinase and phosphorylase involved in the regulation of the phosphoenolpyruvate synthase (PEPS) by catalyzing its phosphorylation/dephosphorylation. This Pseudomonas putida (strain W619) protein is Putative phosphoenolpyruvate synthase regulatory protein.